The following is a 299-amino-acid chain: Ribosomal RNA small subunit methyltransferase H (299 aa).

S-adenosyl-L-methionine is bound by residues 45-47, Asp-64, Phe-92, Asp-108, and Gln-115; that span reads GGH. The disordered stretch occupies residues 275–299; the sequence is PQSDEQAKNPRSRSAKLRLAQRKEQ. Residues 284-299 show a composition bias toward basic residues; the sequence is PRSRSAKLRLAQRKEQ.

The protein belongs to the methyltransferase superfamily. RsmH family.

The protein localises to the cytoplasm. It carries out the reaction cytidine(1402) in 16S rRNA + S-adenosyl-L-methionine = N(4)-methylcytidine(1402) in 16S rRNA + S-adenosyl-L-homocysteine + H(+). Its function is as follows. Specifically methylates the N4 position of cytidine in position 1402 (C1402) of 16S rRNA. The sequence is that of Ribosomal RNA small subunit methyltransferase H from Gloeothece citriformis (strain PCC 7424) (Cyanothece sp. (strain PCC 7424)).